The sequence spans 174 residues: ATP synthase subunit delta, sodium ion specific (174 aa).

This sequence belongs to the ATPase delta chain family. F-type ATPases have 2 components, F(1) - the catalytic core - and F(0) - the membrane proton channel. F(1) has five subunits: alpha(3), beta(3), gamma(1), delta(1), epsilon(1). F(0) has three main subunits: a(1), b(2) and c(10-14). The alpha and beta chains form an alternating ring which encloses part of the gamma chain. F(1) is attached to F(0) by a central stalk formed by the gamma and epsilon chains, while a peripheral stalk is formed by the delta and b chains.

It localises to the cell inner membrane. In terms of biological role, f(1)F(0) ATP synthase produces ATP from ADP in the presence of a proton or sodium gradient. F-type ATPases consist of two structural domains, F(1) containing the extramembraneous catalytic core and F(0) containing the membrane proton channel, linked together by a central stalk and a peripheral stalk. During catalysis, ATP synthesis in the catalytic domain of F(1) is coupled via a rotary mechanism of the central stalk subunits to proton translocation. Its function is as follows. This protein is part of the stalk that links CF(0) to CF(1). It either transmits conformational changes from CF(0) to CF(1) or is implicated in proton conduction. This is ATP synthase subunit delta, sodium ion specific from Propionigenium modestum.